The sequence spans 394 residues: Aspergillopepsin-1 (394 aa).

An N-terminal signal peptide occupies residues 1-20; the sequence is MVVFSKTAALVLGLSTAVSA. A propeptide spans 21 to 69 (activation peptide); it reads APAPTRKGFTINQIARPANKTRTVNLPGLYARSLAKFGGTVPQSVKEAA. The 307-residue stretch at 85–391 folds into the Peptidase A1 domain; it reads YLTPVTVGKS…NSEGPKLGFA (307 aa). The active site involves Asp101. O-linked (Man...) serine glycosylation is found at Ser129 and Ser304. An intrachain disulfide couples Cys319 to Cys354.

This sequence belongs to the peptidase A1 family. As to quaternary structure, monomer.

Its subcellular location is the secreted. It catalyses the reaction Hydrolysis of proteins with broad specificity. Generally favors hydrophobic residues in P1 and P1', but also accepts Lys in P1, which leads to activation of trypsinogen. Does not clot milk.. In terms of biological role, secreted aspartic endopeptidase that allows assimilation of proteinaceous substrates. The scissile peptide bond is attacked by a nucleophilic water molecule activated by two aspartic residues in the active site. Shows a broad primary substrate specificity. Favors hydrophobic residues at the P1 and P1' positions, but also accepts a lysine residue in the P1 position, leading to the activation of trypsinogen and chymotrypsinogen A. In Aspergillus phoenicis (Aspergillus saitoi), this protein is Aspergillopepsin-1 (pepA).